The primary structure comprises 155 residues: Small ribosomal subunit protein uS7 (155 aa).

Belongs to the universal ribosomal protein uS7 family. Part of the 30S ribosomal subunit. Contacts proteins S9 and S11.

Functionally, one of the primary rRNA binding proteins, it binds directly to 16S rRNA where it nucleates assembly of the head domain of the 30S subunit. Is located at the subunit interface close to the decoding center, probably blocks exit of the E-site tRNA. The polypeptide is Small ribosomal subunit protein uS7 (Thermotoga neapolitana (strain ATCC 49049 / DSM 4359 / NBRC 107923 / NS-E)).